A 153-amino-acid polypeptide reads, in one-letter code: Small ribosomal subunit protein uS13 (153 aa).

Positions 132 to 153 are disordered; it reads VRGQRTRSHHRKGRTVGVIKKK. The span at 135–153 shows a compositional bias: basic residues; it reads QRTRSHHRKGRTVGVIKKK.

It belongs to the universal ribosomal protein uS13 family. As to quaternary structure, part of the 30S ribosomal subunit. Forms a loose heterodimer with protein S19. Forms two bridges to the 50S subunit in the 70S ribosome.

Functionally, located at the top of the head of the 30S subunit, it contacts several helices of the 16S rRNA. In the 70S ribosome it contacts the 23S rRNA (bridge B1a) and protein L5 of the 50S subunit (bridge B1b), connecting the 2 subunits; these bridges are implicated in subunit movement. This Nanoarchaeum equitans (strain Kin4-M) protein is Small ribosomal subunit protein uS13.